The primary structure comprises 97 residues: uncharacterized protein (97 aa).

The next 3 helical transmembrane spans lie at 5–25 (TLVA…SLSV), 27–47 (MVFV…LICY), and 77–97 (IISI…VFIL).

The protein localises to the membrane. This is an uncharacterized protein from Saccharomyces cerevisiae (strain ATCC 204508 / S288c) (Baker's yeast).